Here is an 856-residue protein sequence, read N- to C-terminus: DNA mismatch repair protein MutS (856 aa).

ATP is bound at residue 600–607 (GPNMSGKS).

This sequence belongs to the DNA mismatch repair MutS family.

This protein is involved in the repair of mismatches in DNA. It is possible that it carries out the mismatch recognition step. This protein has a weak ATPase activity. The protein is DNA mismatch repair protein MutS of Lactobacillus acidophilus (strain ATCC 700396 / NCK56 / N2 / NCFM).